Consider the following 292-residue polypeptide: 4-hydroxy-tetrahydrodipicolinate synthase (292 aa).

Threonine 45 contacts pyruvate. The active-site Proton donor/acceptor is tyrosine 133. Catalysis depends on lysine 162, which acts as the Schiff-base intermediate with substrate. Isoleucine 204 contributes to the pyruvate binding site.

Belongs to the DapA family. In terms of assembly, homotetramer; dimer of dimers.

Its subcellular location is the cytoplasm. It carries out the reaction L-aspartate 4-semialdehyde + pyruvate = (2S,4S)-4-hydroxy-2,3,4,5-tetrahydrodipicolinate + H2O + H(+). Its pathway is amino-acid biosynthesis; L-lysine biosynthesis via DAP pathway; (S)-tetrahydrodipicolinate from L-aspartate: step 3/4. Its function is as follows. Catalyzes the condensation of (S)-aspartate-beta-semialdehyde [(S)-ASA] and pyruvate to 4-hydroxy-tetrahydrodipicolinate (HTPA). This chain is 4-hydroxy-tetrahydrodipicolinate synthase, found in Nitratidesulfovibrio vulgaris (strain ATCC 29579 / DSM 644 / CCUG 34227 / NCIMB 8303 / VKM B-1760 / Hildenborough) (Desulfovibrio vulgaris).